Reading from the N-terminus, the 277-residue chain is Putative thiosulfate sulfurtransferase mpst-4 (277 aa).

Rhodanese domains are found at residues 15 to 153 and 155 to 243; these read NFGN…VVQS and SKAE…QHLN. The active-site Cysteine persulfide intermediate is the cysteine 204.

The catalysed reaction is thiosulfate + hydrogen cyanide = thiocyanate + sulfite + 2 H(+). This is Putative thiosulfate sulfurtransferase mpst-4 from Caenorhabditis elegans.